A 511-amino-acid chain; its full sequence is V-type proton ATPase subunit B, brain isoform (511 aa).

ATP is bound at residue Arg-400.

It belongs to the ATPase alpha/beta chains family. In terms of assembly, V-ATPase is a heteromultimeric enzyme made up of two complexes: the ATP-hydrolytic V1 complex and the proton translocation V0 complex. The V1 complex consists of three catalytic AB heterodimers that form a heterohexamer, three peripheral stalks each consisting of EG heterodimers, one central rotor including subunits D and F, and the regulatory subunits C and H. The proton translocation complex V0 consists of the proton transport subunit a, a ring of proteolipid subunits c9c'', rotary subunit d, subunits e and f, and the accessory subunits ATP6AP1/Ac45 and ATP6AP2/PRR. In terms of tissue distribution, kidney; found in early distal nephron, encompassing thick ascending limbs and distal convoluted tubules and in the alpha-intercalated cells of the cortical collecting ducts (at protein level). Expressed in epididymal clear cells (at protein level). Mainly expressed in the organ of Corti and spiral ganglion neurons, in both the early postnatal cochlea (P2) and the adult cochlea (P30).

The protein localises to the apical cell membrane. It localises to the melanosome. It is found in the cytoplasm. The protein resides in the cytoplasmic vesicle. Its subcellular location is the secretory vesicle. The protein localises to the synaptic vesicle membrane. It localises to the clathrin-coated vesicle membrane. In terms of biological role, non-catalytic subunit of the V1 complex of vacuolar(H+)-ATPase (V-ATPase), a multisubunit enzyme composed of a peripheral complex (V1) that hydrolyzes ATP and a membrane integral complex (V0) that translocates protons. V-ATPase is responsible for acidifying and maintaining the pH of intracellular compartments and in some cell types, is targeted to the plasma membrane, where it is responsible for acidifying the extracellular environment. In renal intercalated cells, can partially compensate the lack of ATP6V1B1 and mediate secretion of protons (H+) into the urine under base-line conditions but not in conditions of acid load. The sequence is that of V-type proton ATPase subunit B, brain isoform (Atp6v1b2) from Mus musculus (Mouse).